Reading from the N-terminus, the 39-residue chain is Photosystem II reaction center protein L (39 aa).

The chain crosses the membrane as a helical span at residues 18-38; sequence SLYLGLLIVFTTGILFSSYFF.

The protein belongs to the PsbL family. As to quaternary structure, PSII is composed of 1 copy each of membrane proteins PsbA, PsbB, PsbC, PsbD, PsbE, PsbF, PsbH, PsbI, PsbJ, PsbK, PsbL, PsbM, PsbT, PsbX, PsbY, PsbZ, Psb30/Ycf12, peripheral proteins PsbO, CyanoQ (PsbQ), PsbU, PsbV and a large number of cofactors. It forms dimeric complexes.

It localises to the cellular thylakoid membrane. One of the components of the core complex of photosystem II (PSII). PSII is a light-driven water:plastoquinone oxidoreductase that uses light energy to abstract electrons from H(2)O, generating O(2) and a proton gradient subsequently used for ATP formation. It consists of a core antenna complex that captures photons, and an electron transfer chain that converts photonic excitation into a charge separation. This subunit is found at the monomer-monomer interface and is required for correct PSII assembly and/or dimerization. This chain is Photosystem II reaction center protein L, found in Synechococcus sp. (strain CC9311).